Here is a 771-residue protein sequence, read N- to C-terminus: Choline transporter-like protein 1 (771 aa).

Residues 96–116 (FLFFVFLCGWVVVAGFGIMWG) traverse the membrane as a helical segment. 2 N-linked (GlcNAc...) asparagine glycosylation sites follow: asparagine 141 and asparagine 259. Helical transmembrane passes span 312-332 (WWQT…WTVI), 335-355 (LLGS…LGFG), 392-412 (LVVA…ILFI), and 441-461 (LFPF…AIWL). Asparagine 480 carries N-linked (GlcNAc...) asparagine glycosylation. A run of 5 helical transmembrane segments spans residues 514 to 534 (LFAF…ALAG), 566 to 586 (LGSI…RVLL), 603 to 623 (WFLM…KFLT), 662 to 682 (AGIL…ILSF), and 701 to 721 (YYFV…DLFF).

Belongs to the CTL (choline transporter-like) family.

Its subcellular location is the membrane. In Caenorhabditis elegans, this protein is Choline transporter-like protein 1 (chtl-1).